A 127-amino-acid polypeptide reads, in one-letter code: Fluoride-specific ion channel FluC (127 aa).

A run of 4 helical transmembrane segments spans residues 8–28 (LLIA…QYWF), 37–57 (PWGT…VYAI), 68–88 (WKFL…TFSY), and 100–120 (ILFL…AFAG). Residues Gly-78 and Thr-81 each coordinate Na(+).

This sequence belongs to the fluoride channel Fluc/FEX (TC 1.A.43) family.

The protein resides in the cell inner membrane. The catalysed reaction is fluoride(in) = fluoride(out). With respect to regulation, na(+) is not transported, but it plays an essential structural role and its presence is essential for fluoride channel function. Its function is as follows. Fluoride-specific ion channel. Important for reducing fluoride concentration in the cell, thus reducing its toxicity. This is Fluoride-specific ion channel FluC from Leptospira interrogans serogroup Icterohaemorrhagiae serovar copenhageni (strain Fiocruz L1-130).